A 553-amino-acid polypeptide reads, in one-letter code: General alpha-glucoside permease (553 aa).

Positions 1 to 21 (MSVDENQLENGQLLSSENEAS) are enriched in polar residues. The tract at residues 1 to 26 (MSVDENQLENGQLLSSENEASSPFKE) is disordered. The Cytoplasmic segment spans residues 1-33 (MSVDENQLENGQLLSSENEASSPFKESIPSRSS). The helical transmembrane segment at 34-54 (LYLIALTVSLLGVQLTWSVEL) threads the bilayer. Topologically, residues 55-72 (GYGTPYLFSLGLRKEWTS) are extracellular. Residues 73–93 (IIWIAGPLTGILIQPIAGILS) traverse the membrane as a helical segment. Over 94-111 (DRVNSRIGRRRPFMLCAS) the chain is Cytoplasmic. Residues 112–132 (LLGTFSLFLMGWAPDICLFIF) form a helical membrane-spanning segment. Residues 133-140 (SNEVLMKR) are Extracellular-facing. A helical membrane pass occupies residues 141 to 161 (VTIVLATISIYLLDVAVNVVM). The Cytoplasmic portion of the chain corresponds to 162 to 186 (ASTRSLIVDSVRSDQQHEANSWAGR). A helical membrane pass occupies residues 187–207 (MIGVGNVLGYLLGYLPLYRIF). The Extracellular segment spans residues 208 to 216 (SFLNFTQLQ). The chain crosses the membrane as a helical span at residues 217–237 (VFCVLASISLVLTVTITTIFV). The Cytoplasmic segment spans residues 238–280 (SERRFPPVEHEKSVAGEIFEFFTTMRQSITALPFTLKRICFVQ). A helical transmembrane segment spans residues 281–301 (FFAYFGWFPFLFYITTYVGIL). Over 302-322 (YLRHAPKGHEEDWDMATRQGS) the chain is Extracellular. Residues 323–343 (FALLLFAIISLAANTALPLLL) form a helical membrane-spanning segment. Over 344–424 (EDTEDDEEDE…SKVQIKGLTL (81 aa)) the chain is Cytoplasmic. The disordered stretch occupies residues 368–399 (NDLGNIRTGTNTPRLGNLSETTSFRSENEPSR). The span at 374–392 (RTGTNTPRLGNLSETTSFR) shows a compositional bias: polar residues. A helical membrane pass occupies residues 425-445 (PILWLSSHVLFGVCMLSTIFL). Topologically, residues 446-452 (QTSWQAQ) are extracellular. The helical transmembrane segment at 453–473 (AMVAICGLSWACTLWIPYSLF) threads the bilayer. Residues 474 to 494 (SSEIGKLGLRESSGKMIGVHN) lie on the Cytoplasmic side of the membrane. A helical membrane pass occupies residues 495 to 515 (VFISAPQVLSTIIATIVFIQS). Topologically, residues 516 to 521 (EGSHRD) are extracellular. Residues 522 to 542 (IADNSIAWVLRIGGISAFLAA) form a helical membrane-spanning segment. Over 543–553 (YQCRHLLPINF) the chain is Cytoplasmic.

The protein belongs to the glycoside-pentoside-hexuronide (GPH) cation symporter transporter (TC 2.A.2.4) family.

Its subcellular location is the membrane. Responsible for the transport of maltose and sucrose into the cell, with the concomitant uptake of protons (symport system). This chain is General alpha-glucoside permease (sut1), found in Schizosaccharomyces pombe (strain 972 / ATCC 24843) (Fission yeast).